A 563-amino-acid polypeptide reads, in one-letter code: NAD-dependent malic enzyme (563 aa).

Tyr-101 (proton donor) is an active-site residue. NAD(+) is bound at residue Arg-154. The active-site Proton acceptor is the Lys-172. The a divalent metal cation site is built by Glu-243, Asp-244, and Asp-267. The NAD(+) site is built by Asp-267 and Asn-416.

It belongs to the malic enzymes family. In terms of assembly, homotetramer. Mg(2+) serves as cofactor. Mn(2+) is required as a cofactor.

The catalysed reaction is (S)-malate + NAD(+) = pyruvate + CO2 + NADH. It carries out the reaction oxaloacetate + H(+) = pyruvate + CO2. In Pseudomonas syringae pv. syringae (strain B728a), this protein is NAD-dependent malic enzyme.